Here is a 298-residue protein sequence, read N- to C-terminus: Glutamyl-Q tRNA(Asp) synthetase (298 aa).

L-glutamate is bound by residues 9–13 and glutamate 45; that span reads RFAPS. The short motif at 12–22 is the 'HIGH' region element; the sequence is PSPSGELHFGS. 4 residues coordinate Zn(2+): cysteine 101, cysteine 103, tyrosine 115, and cysteine 119. Positions 172 and 190 each coordinate L-glutamate. The 'KMSKS' region signature appears at 228–232; that stretch reads KLSKQ. Lysine 231 lines the ATP pocket.

This sequence belongs to the class-I aminoacyl-tRNA synthetase family. GluQ subfamily. Zn(2+) serves as cofactor.

Functionally, catalyzes the tRNA-independent activation of glutamate in presence of ATP and the subsequent transfer of glutamate onto a tRNA(Asp). Glutamate is transferred on the 2-amino-5-(4,5-dihydroxy-2-cyclopenten-1-yl) moiety of the queuosine in the wobble position of the QUC anticodon. The polypeptide is Glutamyl-Q tRNA(Asp) synthetase (Salmonella typhimurium (strain LT2 / SGSC1412 / ATCC 700720)).